Consider the following 428-residue polypeptide: C4-dicarboxylate transport protein (428 aa).

8 helical membrane-spanning segments follow: residues 8–28 (SLYFQVLTAIAIGILLGHFYP), 44–64 (LIKMIIAPVIFCTVVTGIAGM), 76–96 (VALLYFEVVSTIALIIGLIIV), 142–162 (IGAFASGNILQVLLFAVLFGF), 184–204 (VIFGIINMIMRLAPIGAFGAM), 222–242 (LIICFYITCILFVVVVLGSIA), 326–346 (IFHQITLLVVLLLSSKGAAGV), and 352–372 (IVLAATISAVGHLPIAGLALI).

The protein belongs to the dicarboxylate/amino acid:cation symporter (DAACS) (TC 2.A.23) family.

Its subcellular location is the cell inner membrane. Functionally, responsible for the transport of dicarboxylates such as succinate, fumarate, and malate from the periplasm across the membrane. In Enterobacter sp. (strain 638), this protein is C4-dicarboxylate transport protein.